We begin with the raw amino-acid sequence, 220 residues long: Metalloproteinase inhibitor 2 (220 aa).

Residues 1-26 (MGAAARSLRLALGLLLLATLLRPADA) form the signal peptide. Cysteine 27 contributes to the Zn(2+) binding site. Involved in metalloproteinase-binding stretches follow at residues 27 to 30 (CSCS) and 95 to 96 (SA). Disulfide bonds link cysteine 27–cysteine 98, cysteine 29–cysteine 127, cysteine 39–cysteine 152, cysteine 154–cysteine 201, cysteine 159–cysteine 164, and cysteine 172–cysteine 193. The NTR domain maps to 27 to 152 (CSCSPVHPQQ…SLNHRYQMGC (126 aa)).

Belongs to the protease inhibitor I35 (TIMP) family. In terms of assembly, interacts (via the C-terminal) with MMP2 (via the C-terminal PEX domain); the interaction inhibits the MMP2 activity. Post-translationally, the activity of TIMP2 is dependent on the presence of disulfide bonds.

It localises to the secreted. Complexes with metalloproteinases (such as collagenases) and irreversibly inactivates them by binding to their catalytic zinc cofactor. This is Metalloproteinase inhibitor 2 (Timp2) from Rattus norvegicus (Rat).